The primary structure comprises 539 residues: Glutamate/serine transporter AimA (539 aa).

A run of 13 helical transmembrane segments spans residues 11-31, 36-56, 82-102, 137-157, 164-184, 199-219, 238-258, 283-303, 350-370, 401-421, 424-444, 457-477, and 486-506; these read FSLM…FGAW, IAGP…LFIA, SFIG…VIPV, AFAS…VNLF, ITIF…FVGF, GWAS…FNGF, IAVV…QIAF, LAIA…AFVS, LIVS…AEII, LKGL…VLYW, WPLT…YFYY, FKAG…SYLG, and VIHY…FYVW.

The protein belongs to the amino acid-polyamine-organocation (APC) superfamily. AGT (TC 2.A.3.11) family.

Its subcellular location is the cell membrane. Major glutamate and serine transporter. Cannot transport threonine. AimA is the major glutamate transporter under standard growth conditions when glutamate is not limiting in the medium. The polypeptide is Glutamate/serine transporter AimA (Bacillus subtilis (strain 168)).